Reading from the N-terminus, the 316-residue chain is Aspartate carbamoyltransferase catalytic subunit (316 aa).

Residues Arg66 and Thr67 each contribute to the carbamoyl phosphate site. Lys94 lines the L-aspartate pocket. Carbamoyl phosphate contacts are provided by Arg116, His146, and Gln149. L-aspartate-binding residues include Arg179 and Arg234. Positions 275 and 276 each coordinate carbamoyl phosphate.

This sequence belongs to the aspartate/ornithine carbamoyltransferase superfamily. ATCase family. In terms of assembly, heterododecamer (2C3:3R2) of six catalytic PyrB chains organized as two trimers (C3), and six regulatory PyrI chains organized as three dimers (R2).

It catalyses the reaction carbamoyl phosphate + L-aspartate = N-carbamoyl-L-aspartate + phosphate + H(+). It participates in pyrimidine metabolism; UMP biosynthesis via de novo pathway; (S)-dihydroorotate from bicarbonate: step 2/3. In terms of biological role, catalyzes the condensation of carbamoyl phosphate and aspartate to form carbamoyl aspartate and inorganic phosphate, the committed step in the de novo pyrimidine nucleotide biosynthesis pathway. The protein is Aspartate carbamoyltransferase catalytic subunit of Nitrosomonas europaea (strain ATCC 19718 / CIP 103999 / KCTC 2705 / NBRC 14298).